A 386-amino-acid polypeptide reads, in one-letter code: Alcohol dehydrogenase-like 2 (386 aa).

Zn(2+) is bound by residues cysteine 51, threonine 53, histidine 74, cysteine 104, cysteine 107, cysteine 110, cysteine 118, and cysteine 183. 2 residues coordinate an alcohol: threonine 53 and histidine 74. Threonine 53 lines the NAD(+) pocket. Residues 208-213 (GLGAVG), aspartate 232, lysine 237, 302-304 (LGM), phenylalanine 329, and arginine 379 each bind NAD(+).

This sequence belongs to the zinc-containing alcohol dehydrogenase family. Class-III subfamily. As to quaternary structure, homodimer. The cofactor is Zn(2+).

It is found in the cytoplasm. It catalyses the reaction a primary alcohol + NAD(+) = an aldehyde + NADH + H(+). The enzyme catalyses a secondary alcohol + NAD(+) = a ketone + NADH + H(+). This chain is Alcohol dehydrogenase-like 2, found in Arabidopsis thaliana (Mouse-ear cress).